We begin with the raw amino-acid sequence, 184 residues long: Lysozyme 1 (184 aa).

The signal sequence occupies residues 1–20; that stretch reads MNGLILFCAVVFATAVCTYG. In terms of domain architecture, I-type lysozyme spans 69 to 184; the sequence is TGMVSQQCLR…WRRVQAQGCN (116 aa). Cystine bridges form between cysteine 76–cysteine 152, cysteine 81–cysteine 87, cysteine 92–cysteine 101, cysteine 114–cysteine 134, cysteine 124–cysteine 130, and cysteine 148–cysteine 166. Glutamate 84 (proton donor) is an active-site residue. Aspartate 95 (nucleophile) is an active-site residue. 107–113 lines the substrate pocket; the sequence is KRAYWID. Substrate is bound by residues tyrosine 138 and 159–161; that span reads HNG.

In terms of tissue distribution, hemolymph, labial palps, non-vesiculated cells of mantle connective tissue, cells of interlamellar junctions and epithelia surrounding the water tubes of the gills.

Its subcellular location is the secreted. It carries out the reaction Hydrolysis of (1-&gt;4)-beta-linkages between N-acetylmuramic acid and N-acetyl-D-glucosamine residues in a peptidoglycan and between N-acetyl-D-glucosamine residues in chitodextrins.. Its function is as follows. Has antibacterial activity against the Gram-positive bacteria L.garvieae, M.luteus and Enterococcus sp., and the Gram-negative bacteria E.coli and V.vulnificus. Weak antibacterial activity against the Gram-negative bacterium A.hydrophila. No antibacterial activity detected against the Gram-positive bacterium S.iniae or against the Gram-negative bacterium E.ictaluri. Shows some chitinase activity but no isopeptidase activity. The sequence is that of Lysozyme 1 from Crassostrea virginica (Eastern oyster).